A 262-amino-acid polypeptide reads, in one-letter code: Cytochrome c oxidase subunit 3 (262 aa).

The next 6 helical transmembrane spans lie at 39-59 (YTMT…YQWW), 83-103 (GMIL…WAFF), 120-140 (VGIA…ILLA), 163-183 (GLFF…YEYI), 201-221 (ATGF…ICFL), and 240-260 (AWYW…IYWW).

The protein belongs to the cytochrome c oxidase subunit 3 family. In terms of assembly, component of the cytochrome c oxidase (complex IV, CIV), a multisubunit enzyme composed of a catalytic core of 3 subunits and several supernumerary subunits. The complex exists as a monomer or a dimer and forms supercomplexes (SCs) in the inner mitochondrial membrane with ubiquinol-cytochrome c oxidoreductase (cytochrome b-c1 complex, complex III, CIII).

Its subcellular location is the mitochondrion inner membrane. It catalyses the reaction 4 Fe(II)-[cytochrome c] + O2 + 8 H(+)(in) = 4 Fe(III)-[cytochrome c] + 2 H2O + 4 H(+)(out). Functionally, component of the cytochrome c oxidase, the last enzyme in the mitochondrial electron transport chain which drives oxidative phosphorylation. The respiratory chain contains 3 multisubunit complexes succinate dehydrogenase (complex II, CII), ubiquinol-cytochrome c oxidoreductase (cytochrome b-c1 complex, complex III, CIII) and cytochrome c oxidase (complex IV, CIV), that cooperate to transfer electrons derived from NADH and succinate to molecular oxygen, creating an electrochemical gradient over the inner membrane that drives transmembrane transport and the ATP synthase. Cytochrome c oxidase is the component of the respiratory chain that catalyzes the reduction of oxygen to water. Electrons originating from reduced cytochrome c in the intermembrane space (IMS) are transferred via the dinuclear copper A center (CU(A)) of subunit 2 and heme A of subunit 1 to the active site in subunit 1, a binuclear center (BNC) formed by heme A3 and copper B (CU(B)). The BNC reduces molecular oxygen to 2 water molecules using 4 electrons from cytochrome c in the IMS and 4 protons from the mitochondrial matrix. The protein is Cytochrome c oxidase subunit 3 (COIII) of Anopheles gambiae (African malaria mosquito).